A 634-amino-acid chain; its full sequence is Factor of DNA methylation 5 (634 aa).

A coiled-coil region spans residues Ile254 to Lys469.

Acts in association with FDM3 and FDM4 for RNA-directed DNA methylation (RdDM). The protein is Factor of DNA methylation 5 of Arabidopsis thaliana (Mouse-ear cress).